Reading from the N-terminus, the 286-residue chain is Bifunctional protein FolD (286 aa).

Residues 170–172 (GHS) and Ile-236 contribute to the NADP(+) site.

The protein belongs to the tetrahydrofolate dehydrogenase/cyclohydrolase family. Homodimer.

It catalyses the reaction (6R)-5,10-methylene-5,6,7,8-tetrahydrofolate + NADP(+) = (6R)-5,10-methenyltetrahydrofolate + NADPH. The enzyme catalyses (6R)-5,10-methenyltetrahydrofolate + H2O = (6R)-10-formyltetrahydrofolate + H(+). Its pathway is one-carbon metabolism; tetrahydrofolate interconversion. In terms of biological role, catalyzes the oxidation of 5,10-methylenetetrahydrofolate to 5,10-methenyltetrahydrofolate and then the hydrolysis of 5,10-methenyltetrahydrofolate to 10-formyltetrahydrofolate. In Methanococcoides burtonii (strain DSM 6242 / NBRC 107633 / OCM 468 / ACE-M), this protein is Bifunctional protein FolD.